A 350-amino-acid polypeptide reads, in one-letter code: Ferredoxin--NADP reductase (350 aa).

FAD is bound by residues Thr14, Asp33, Gln41, Tyr46, Ala86, Phe121, Asp286, and Thr327.

This sequence belongs to the ferredoxin--NADP reductase type 2 family. As to quaternary structure, homodimer. It depends on FAD as a cofactor.

It carries out the reaction 2 reduced [2Fe-2S]-[ferredoxin] + NADP(+) + H(+) = 2 oxidized [2Fe-2S]-[ferredoxin] + NADPH. In Flavobacterium johnsoniae (strain ATCC 17061 / DSM 2064 / JCM 8514 / BCRC 14874 / CCUG 350202 / NBRC 14942 / NCIMB 11054 / UW101) (Cytophaga johnsonae), this protein is Ferredoxin--NADP reductase.